The primary structure comprises 170 residues: Neurotensin/neuromedin N (170 aa).

A signal peptide spans 1–23 (MMAGMKIQLVCMILLAFSSWSLC).

This sequence belongs to the neurotensin family. Interacts with NTSR1. Interacts with SORT1. Interacts with SORL1. Neurotensin is cleaved and degraded by Angiotensin-converting enzyme (ACE) and neprilysin (MME). In terms of tissue distribution, brain and gut.

The protein resides in the secreted. It is found in the cytoplasmic vesicle. It localises to the secretory vesicle. Its function is as follows. Neurotensin may play an endocrine or paracrine role in the regulation of fat metabolism. It causes contraction of smooth muscle. This is Neurotensin/neuromedin N (NTS) from Bos taurus (Bovine).